The sequence spans 743 residues: MKRRELIRTAFSTIVATAALSSVSARARSEDLHGLTLKKVPPDAIPKNDVPIFSPDDVFTMPEQFWRDFKGKLYIGKAGTDPTLPQNLIDVFVKNANGGTALLSQPIDLNSETLKTFVAAKGALWSASEYSMALHNDNDEQIFYVPDVKNNGVSEFSRRLSQPGGYQLIGEISSFASLRQTRPLFSGAKVRLKGWHDGTEVGGGAFVGEMTPSEDDGGYIASSGQDFHWRRVSDDMNRITLFDFGAVADGKKDCLPAVMAMYHWAQNNNQKLSIQFPAGRFFISSFDISAKYIRFLRLAGAPVNFGYFPATTLVSDGKSEFLFKVNARWVELSNISFEGQIEHSPNGQGFFHNICPAGQYFRGSCLRFTGVGGVSLSLIDTLDCKIDQWYASKCTGDVIRGSWSFTKKGNWDHNTAIELSNFNVQHCRQGKVLNLPRCTQSIIHNGWIEHSEFPGDLSNGQWIVDALSLEGCKNPLIAHCSRLNMRQTNLQSGSWIDNSLANDEWLSSFERGSTRVESYGIAVDGSMKYNYLTSRFRIENHSSQEKWYELGNIHTPDVGDSWEIEVFGQSQFSNGSGTKALMSVTDDRHTGGKAIINLQRKIHGFEASWSVEGSSPINDVVYTTSNDSDTRVFVKLAQWLGSAGVMIKTTAKDRFVTGHCARFDSRMVHSEPPKGEKVHSAVRRFSLHNGLAGIGANEQGDLLVESRHIDAAKVETSRAEGYISLVINGQQVAVPYFALKQNS.

The first 27 residues, 1-27, serve as a signal peptide directing secretion; that stretch reads MKRRELIRTAFSTIVATAALSSVSARA.

This sequence to R.meliloti ExoP.

It is found in the periplasm. The protein operates within glycan metabolism; exopolysaccharide biosynthesis. In terms of biological role, involved in the biosynthesis of amylovoran which functions as a virulence factor. May be involved in the polymerization or late modification of the repeating units. This chain is Amylovoran biosynthesis protein AmsF (amsF), found in Erwinia amylovora (Fire blight bacteria).